Reading from the N-terminus, the 275-residue chain is Ribosome biogenesis protein RLP7 (275 aa).

Residues 14-45 (KRKNNDRKRLEKQEQARQRQLEQKKKNDQRSK) are disordered. Residues 20-44 (RKRLEKQEQARQRQLEQKKKNDQRS) show a composition bias toward basic and acidic residues.

The protein belongs to the universal ribosomal protein uL30 family.

The protein resides in the nucleus. The protein localises to the nucleolus. Involved in the biogenesis of the 60S ribosomal subunit. May act as a specificity factor that binds precursor rRNAs and tethers the enzymes that carry out the early 5' to 3' exonucleolytic reactions that generate the mature rRNAs. This Debaryomyces hansenii (strain ATCC 36239 / CBS 767 / BCRC 21394 / JCM 1990 / NBRC 0083 / IGC 2968) (Yeast) protein is Ribosome biogenesis protein RLP7 (RLP7).